A 477-amino-acid polypeptide reads, in one-letter code: MDLFLYNTLSREKERFLPVNDPVKLYTCGPTVYDYAHIGNFRTYIFEDLLKRVLLFLGYSVYHVMNITDVDDKTLAGARKKGCSLEKYCQPYIHAFFADLETLHILKADAYPHATHYIPQMIEAIQQLINQGVAYIGQDQSVYFSISQFPNYGALSHLNLEELRNSARIDADEYDKDNLCDFVLWKAYDPDRDGEIFWESPFGKGRPGWHLECSIMSISLLGQSLDIHAGGVDNIFPHHENEIAQSESLSHKPFVRYWLHSHHLLVDRKKMSKSLGNFFTLRDLLDQGFSGEEVRYLLLQGHYRTQLNFTQEGLHASRQSLKRLRDFICRLEDPSYPDDIIHPEVATACQSFLETFITSLTNDLNISSSLAALFDFIRKINSSIDQHTGIQTETDSSVFSKQDAQHILALLRKIDQVLGVLPFSQPDIPEEVLLLVEQREAARKVKNWQEADRLRDEILSRGFAIEDGKTGMKVKKL.

Residue cysteine 28 participates in Zn(2+) binding. The 'HIGH' region signature appears at 30–40; that stretch reads PTVYDYAHIGN. Zn(2+)-binding residues include cysteine 213, histidine 238, and glutamate 242. Positions 270–274 match the 'KMSKS' region motif; the sequence is KMSKS. Position 273 (lysine 273) interacts with ATP.

The protein belongs to the class-I aminoacyl-tRNA synthetase family. Monomer. Requires Zn(2+) as cofactor.

Its subcellular location is the cytoplasm. It catalyses the reaction tRNA(Cys) + L-cysteine + ATP = L-cysteinyl-tRNA(Cys) + AMP + diphosphate. The protein is Cysteine--tRNA ligase of Chlamydia trachomatis serovar A (strain ATCC VR-571B / DSM 19440 / HAR-13).